A 463-amino-acid polypeptide reads, in one-letter code: Argininosuccinate lyase (463 aa).

Belongs to the lyase 1 family. Argininosuccinate lyase subfamily.

The protein localises to the cytoplasm. It carries out the reaction 2-(N(omega)-L-arginino)succinate = fumarate + L-arginine. Its pathway is amino-acid biosynthesis; L-arginine biosynthesis; L-arginine from L-ornithine and carbamoyl phosphate: step 3/3. This Chlorobaculum tepidum (strain ATCC 49652 / DSM 12025 / NBRC 103806 / TLS) (Chlorobium tepidum) protein is Argininosuccinate lyase.